The following is a 498-amino-acid chain: Zinc finger protein 682 (498 aa).

A KRAB domain is found at 4–75 (LTFRDVTIEF…KRHETIAKPP (72 aa)). 10 C2H2-type zinc fingers span residues 173–195 (FKCMQCGKVFKSHSGLSYHKIIH), 201–223 (CICEECGKTFKWFSYLTKHKRIH), 229–251 (YKCEECGKAFNWCSSLTKHKRIH), 257–279 (YKCEECGKAFHWCSPFVRHKKIH), 285–307 (YTCEDCGRAFNRHSHLTKHKTIH), 313–335 (YKCKECGKAFNHCSLLTIHERTH), 341–363 (YKCEECGKAFNSSSILTEHKVIH), 369–391 (YKCEKCDKVFKRFSYLTKHKRIH), 397–419 (YKCEECGKAFNWSSILTEHKRIH), and 425–447 (YNCEECGKAFNRCSHLTRHKKIH). A C2H2-type 11; degenerate zinc finger spans residues 453–475 (YKCEECGKAFKRCSHLNEHKRVQ).

Belongs to the krueppel C2H2-type zinc-finger protein family.

The protein localises to the nucleus. Functionally, may be involved in transcriptional regulation. The chain is Zinc finger protein 682 (ZNF682) from Homo sapiens (Human).